The chain runs to 465 residues: tRNA modification GTPase MnmE (465 aa).

3 residues coordinate (6S)-5-formyl-5,6,7,8-tetrahydrofolate: R27, E91, and R130. The region spanning 227–386 (GLSTAIIGRP…LEAKIADLFF (160 aa)) is the TrmE-type G domain. N237 provides a ligand contact to K(+). Residues 237–242 (NVGKSS), 256–262 (TDIAGTT), and 281–284 (DTAG) contribute to the GTP site. S241 lines the Mg(2+) pocket. Positions 256, 258, and 261 each coordinate K(+). T262 contacts Mg(2+). K465 contacts (6S)-5-formyl-5,6,7,8-tetrahydrofolate.

It belongs to the TRAFAC class TrmE-Era-EngA-EngB-Septin-like GTPase superfamily. TrmE GTPase family. As to quaternary structure, homodimer. Heterotetramer of two MnmE and two MnmG subunits. K(+) serves as cofactor.

The protein resides in the cytoplasm. Exhibits a very high intrinsic GTPase hydrolysis rate. Involved in the addition of a carboxymethylaminomethyl (cmnm) group at the wobble position (U34) of certain tRNAs, forming tRNA-cmnm(5)s(2)U34. The polypeptide is tRNA modification GTPase MnmE (Enterococcus faecalis (strain ATCC 700802 / V583)).